The chain runs to 60 residues: MARLKITQTKSYIGSKQNHRDTLRSLGLKRLNDSVVKEDRPEFRGMVQTVRHLVTVEEVD.

The protein belongs to the universal ribosomal protein uL30 family. As to quaternary structure, part of the 50S ribosomal subunit.

The chain is Large ribosomal subunit protein uL30 from Streptomyces filamentosus (Streptomyces roseosporus).